Here is a 782-residue protein sequence, read N- to C-terminus: Cyclic nucleotide-gated channel beta-3 (782 aa).

Disordered stretches follow at residues 1-111 and 147-168; these read MFKS…PKSK and GDIS…PSTQ. At 1–213 the chain is on the cytoplasmic side; sequence MFKSLTIKSN…SIDSYTDRLY (213 aa). Composition is skewed to basic and acidic residues over residues 13–25 and 57–73; these read KPRE…KQDP and EESH…KNSL. Polar residues-rich tracts occupy residues 74 to 83 and 152 to 168; these read RDLTTNPNHQ and PEAS…PSTQ. A helical membrane pass occupies residues 214–237; it reads LLWLLLVTIAYNWNCWLIPLRLVF. The Extracellular segment spans residues 238–244; the sequence is PYQTPDN. The helical transmembrane segment at 245 to 265 threads the bilayer; the sequence is THYWFITDITCDIIYLCDMLL. The Cytoplasmic segment spans residues 266 to 294; the sequence is IQPRLQFIKGGDIMVDSNELKRHYRSSTK. Residues 295 to 312 form a helical membrane-spanning segment; that stretch reads FQLDVASVMPFDVFYLFF. The Extracellular portion of the chain corresponds to 313–315; that stretch reads GFN. Residues 316–330 form a helical membrane-spanning segment; the sequence is PVFRMNRILKYTSFF. The Cytoplasmic segment spans residues 331–343; it reads EFNHHLESIMDKA. The interval 343–442 is ion conduction pathway; it reads AYIYRVIRTT…IGQMQDVIGA (100 aa). Residues 344–366 traverse the membrane as a helical segment; it reads YIYRVIRTTGYLLYTLHINACIY. Over 367-388 the chain is Extracellular; the sequence is YWASDYEGIGSTKWVYNGEGNK. Transmembrane regions (helical) follow at residues 389-415 and 416-440; these read YLRC…SFEI and VFQL…QDVI. The segment at 402–405 is selectivity filter; the sequence is TIGG. Topologically, residues 441 to 782 are cytoplasmic; it reads GAATANQNNF…TIEVKEKAKQ (342 aa). The C-linker stretch occupies residues 445–521; that stretch reads ANQNNFRISM…SIISKVELFK (77 aa). The segment at 525–641 is cyclic nucleotide-binding domain; that stretch reads TQMIYDMLLR…LLMKKASVLL (117 aa). G586, E587, R599, and T600 together coordinate 3',5'-cyclic GMP. The interval 692-724 is disordered; that stretch reads EQTIQKTSENSEEGGGKRREYEDKEREPSEKIL. Over residues 705–724 the composition is skewed to basic and acidic residues; that stretch reads GGGKRREYEDKEREPSEKIL.

This sequence belongs to the cyclic nucleotide-gated cation channel (TC 1.A.1.5) family. CNGB3 subfamily. Forms heterotetrameric channels composed of CNGA3 and CNGB3 subunits with 3:1 stoichiometry.

The protein resides in the cell membrane. The enzyme catalyses Ca(2+)(in) = Ca(2+)(out). The catalysed reaction is Na(+)(in) = Na(+)(out). It carries out the reaction K(+)(in) = K(+)(out). It catalyses the reaction NH4(+)(in) = NH4(+)(out). The enzyme catalyses Rb(+)(in) = Rb(+)(out). The catalysed reaction is Li(+)(in) = Li(+)(out). It carries out the reaction Cs(+)(in) = Cs(+)(out). Functionally, pore-forming subunit of the cone cyclic nucleotide-gated channel. Mediates cone photoresponses at bright light converting transient changes in intracellular cGMP levels into electrical signals. In the dark, cGMP levels are high and keep the channel open enabling a steady inward current carried by Na(+) and Ca(2+) ions that leads to membrane depolarization and neurotransmitter release from synaptic terminals. Upon photon absorption cGMP levels decline leading to channel closure and membrane hyperpolarization that ultimately slows neurotransmitter release and signals the presence of light, the end point of the phototransduction cascade. Conducts cGMP- and cAMP-gated ion currents, with permeability for monovalent and divalent cations. In Canis lupus familiaris (Dog), this protein is Cyclic nucleotide-gated channel beta-3.